The primary structure comprises 460 residues: 3-isopropylmalate dehydratase large subunit (460 aa).

Residues C338, C398, and C401 each coordinate [4Fe-4S] cluster.

It belongs to the aconitase/IPM isomerase family. LeuC type 1 subfamily. As to quaternary structure, heterodimer of LeuC and LeuD. The cofactor is [4Fe-4S] cluster.

It carries out the reaction (2R,3S)-3-isopropylmalate = (2S)-2-isopropylmalate. It functions in the pathway amino-acid biosynthesis; L-leucine biosynthesis; L-leucine from 3-methyl-2-oxobutanoate: step 2/4. Functionally, catalyzes the isomerization between 2-isopropylmalate and 3-isopropylmalate, via the formation of 2-isopropylmaleate. The polypeptide is 3-isopropylmalate dehydratase large subunit (Streptococcus sanguinis (strain SK36)).